Here is a 464-residue protein sequence, read N- to C-terminus: Asparagine--tRNA ligase (464 aa).

The protein belongs to the class-II aminoacyl-tRNA synthetase family. As to quaternary structure, homodimer.

Its subcellular location is the cytoplasm. The catalysed reaction is tRNA(Asn) + L-asparagine + ATP = L-asparaginyl-tRNA(Asn) + AMP + diphosphate + H(+). The protein is Asparagine--tRNA ligase of Clostridium botulinum (strain Alaska E43 / Type E3).